The chain runs to 1436 residues: Probable deoxyribonuclease RhsB (1436 aa).

A disordered region spans residues 16–42 (HAGNRPNPPADRPQPCQGKPPTSPGKT). 2 helical membrane-spanning segments follow: residues 48 to 68 (FLGALAGAVAGALVAAAVAAA) and 70 to 90 (VFLVGVTGGLAVAAVGALAVF). YD repeat units follow at residues 486–521 (YNTAHRLTRWHDNDQTWARYEYDAQGRCVYTTCADG), 569–605 (YDEVGNLLREISPAGRVVEFTYLDDTGRVSTFTDGSG), 612–647 (YDDAQRLCGVTDPLGREWGWVYDAEGNPERLTGPDA), 766–799 (DLLTARTDAEGRTWRYEYDRESQQLIAVTAPDGS), and 847–879 (YDARGLLLRETAPDDTLHYRYDAAGRLTEVSSA).

Belongs to the RHS/WapA nuclease family.

It localises to the membrane. Toxic component of a toxin-immunity protein module, which functions as a cellular contact-dependent growth inhibition (CDI) system. This protein may be a nuclease that is specifically inhibited by its cognate immunity protein RhsBI. Upon expression of the C-terminus (residues 1284-1436) in E.coli growth is inhibited, cells elongate, nucleoids condense and plasmid DNA is degraded; these effects are blocked specifically by cognate immunity protein RshIB. Cell contact is necessary for growth inhibition. The protein is Probable deoxyribonuclease RhsB (rhsB) of Dickeya dadantii (strain 3937) (Erwinia chrysanthemi (strain 3937)).